Reading from the N-terminus, the 435-residue chain is Transcriptional enhancer factor TEF-5 (435 aa).

Polar residues predominate over residues 1 to 12 (MASNSWNASSSP). Positions 1-34 (MASNSWNASSSPGEAREDGPEGLDKGLDNDAEGV) are disordered. Ala2 carries the N-acetylalanine modification. Basic and acidic residues predominate over residues 14 to 28 (EAREDGPEGLDKGLD). A DNA-binding region (TEA) is located at residues 28-104 (DNDAEGVWSP…QVLARKKVRE (77 aa)). At Ser148 the chain carries Phosphoserine. The tract at residues 173 to 435 (GPSQDIKPFA…QHHVYKLVKD (263 aa)) is transcriptional activation.

Interacts with YAP1 and WWTR1/TAZ. As to expression, preferentially expressed in the placenta.

It is found in the nucleus. Its function is as follows. Transcription factor which plays a key role in the Hippo signaling pathway, a pathway involved in organ size control and tumor suppression by restricting proliferation and promoting apoptosis. The core of this pathway is composed of a kinase cascade wherein MST1/MST2, in complex with its regulatory protein SAV1, phosphorylates and activates LATS1/2 in complex with its regulatory protein MOB1, which in turn phosphorylates and inactivates YAP1 oncoprotein and WWTR1/TAZ. Acts by mediating gene expression of YAP1 and WWTR1/TAZ, thereby regulating cell proliferation, migration and epithelial mesenchymal transition (EMT) induction. Binds to multiple functional elements of the human chorionic somatomammotropin-B gene enhancer. The polypeptide is Transcriptional enhancer factor TEF-5 (TEAD3) (Homo sapiens (Human)).